The primary structure comprises 95 residues: MAKKSMIARDVKRAKLVDKYAEKRAELKKRIAAGDMEAMFELNKLPKDSSAVRKRNRCQLDGRPRGYMREFGISRVKFRQLAGAGVIPGVKKSSW.

Belongs to the universal ribosomal protein uS14 family. As to quaternary structure, part of the 30S ribosomal subunit. Contacts proteins S3 and S10.

Binds 16S rRNA, required for the assembly of 30S particles and may also be responsible for determining the conformation of the 16S rRNA at the A site. The polypeptide is Small ribosomal subunit protein uS14 (Fusobacterium nucleatum subsp. nucleatum (strain ATCC 25586 / DSM 15643 / BCRC 10681 / CIP 101130 / JCM 8532 / KCTC 2640 / LMG 13131 / VPI 4355)).